The sequence spans 93 residues: Acylphosphatase (93 aa).

In terms of domain architecture, Acylphosphatase-like spans 6-93 (RAHILVSGEV…GDLGPFSVRH (88 aa)). Active-site residues include arginine 21 and asparagine 39.

It belongs to the acylphosphatase family.

It carries out the reaction an acyl phosphate + H2O = a carboxylate + phosphate + H(+). The protein is Acylphosphatase (acyP) of Anaeromyxobacter sp. (strain Fw109-5).